The chain runs to 87 residues: Exodeoxyribonuclease 7 small subunit (87 aa).

The protein belongs to the XseB family. As to quaternary structure, heterooligomer composed of large and small subunits.

Its subcellular location is the cytoplasm. It carries out the reaction Exonucleolytic cleavage in either 5'- to 3'- or 3'- to 5'-direction to yield nucleoside 5'-phosphates.. Bidirectionally degrades single-stranded DNA into large acid-insoluble oligonucleotides, which are then degraded further into small acid-soluble oligonucleotides. The chain is Exodeoxyribonuclease 7 small subunit from Solidesulfovibrio magneticus (strain ATCC 700980 / DSM 13731 / RS-1) (Desulfovibrio magneticus).